Here is an 878-residue protein sequence, read N- to C-terminus: MSLSLKTRRFGRPVRPQLVLLLLFALCLLSVFISAYYLYGWKRGLEPSGSEAQSPDCDEPKISPSRLLPMKPLKPVDSSRTDPLVLVFVESLYSQLGQEIVAILESSRFKYRTEIAPGKGDMPTLTDKDRGRFALIVYENILKYVNLDAWNRELLDKYCVEYGVGIIGFFKANENSLLSAQLKGFPLYLHSNLGLKDCSINPKSPLLYITRPNQVEKGDLPGEDWTVFQSNHSTYEPVLLAKTKSAESIPHLSVDAALHTTVVQDLGLHDGIQRVLFGNNLNFWLHKLVFVDAVSFLTGKRLSLPLNRYVLVDIDDIFVGKEGTRMKVEDVKALYDTQMELRTHIPNFTFNLGFSGKFFHTGTDAEDEGDDLLLSYVKQFWWFPHMWSHMQPHLFHNQSVLAEQMALNRKFAVEHGIPTDMGYAVAPHHSGVYPVHVQLYEAWKQIWGIKVTSTEEYPHLKPARYRRGFVHNGIMVLPRQTCGLFTHTIFYNEYPGGPVELDKIINGGELFLTVLLNPISIFMTHLSNYGNDRLGLYTFKHLVQFLNTWTNLKLETLPPVQLAHKYFQIFPEEKDPLWQDPCEDKRHKDIWSKEKTCDRFPKLLIIGPQKTGTTALYLFLGMHSDLSSNYPSSETFEEIQFFNGQNYHKGIDWFMEFFPIPSNTTSDFYFEKSANYFDSELAPRRVAALLPKAKIITILINPADRAYSWYQHQRAHDDPVAMKYTFQEVITAGPEAPQRLRALQNRCLVPGWYSTHIERWMNHFHANQILVLDGKLLRTEPANVMETVQKFLGVTNAMDYHKTLAFDPKKGFWCQLLDGGRTKCLGKSKGRKYPDMDSDSRSFLMDYYRDHNIELSKLLYKMGQTLPTWLREELQSTR.

The Cytoplasmic portion of the chain corresponds to 1 to 17; the sequence is MSLSLKTRRFGRPVRPQ. Residues 1–169 form a sufficient for localization to Golgi membrane region; the sequence is MSLSLKTRRF…VEYGVGIIGF (169 aa). A helical; Signal-anchor for type II membrane protein transmembrane segment spans residues 18-38; it reads LVLLLLFALCLLSVFISAYYL. Topologically, residues 39 to 878 are lumenal; the sequence is YGWKRGLEPS…WLREELQSTR (840 aa). Residues 40–594 are heparan sulfate N-deacetylase 1; it reads GWKRGLEPSG…KRHKDIWSKE (555 aa). Residues 47–71 are disordered; it reads PSGSEAQSPDCDEPKISPSRLLPMK. Asparagine 231, asparagine 347, and asparagine 397 each carry an N-linked (GlcNAc...) asparagine glycan. The heparan sulfate N-sulfotransferase 1 stretch occupies residues 595–878; that stretch reads KTCDRFPKLL…WLREELQSTR (284 aa). Residue lysine 610 is the For sulfotransferase activity of the active site. 610-614 lines the adenosine 3',5'-bisphosphate pocket; sequence KTGTT. Residue asparagine 663 is glycosylated (N-linked (GlcNAc...) asparagine). 2 residues coordinate adenosine 3',5'-bisphosphate: serine 708 and tryptophan 813. Cysteine 814 and cysteine 824 are disulfide-bonded. 829-833 is a binding site for adenosine 3',5'-bisphosphate; sequence KGRKY.

The protein belongs to the sulfotransferase 1 family. NDST subfamily. As to quaternary structure, monomer.

Its subcellular location is the golgi apparatus membrane. It is found in the golgi apparatus. It localises to the trans-Golgi network membrane. The catalysed reaction is alpha-D-glucosaminyl-[heparan sulfate](n) + 3'-phosphoadenylyl sulfate = N-sulfo-alpha-D-glucosaminyl-[heparan sulfate](n) + adenosine 3',5'-bisphosphate + 2 H(+). Its pathway is glycan metabolism; heparan sulfate biosynthesis. It participates in glycan metabolism; heparin biosynthesis. In terms of biological role, essential bifunctional enzyme that catalyzes both the N-deacetylation and the N-sulfation of glucosamine (GlcNAc) of the glycosaminoglycan in heparan sulfate. Modifies the GlcNAc-GlcA disaccharide repeating sugar backbone to make N-sulfated heparosan, a prerequisite substrate for later modifications in heparin biosynthesis. Plays a role in determining the extent and pattern of sulfation of heparan sulfate. This is Bifunctional heparan sulfate N-deacetylase/N-sulfotransferase 1 (ndst1) from Xenopus tropicalis (Western clawed frog).